A 396-amino-acid chain; its full sequence is Subtilisin-like protease 5 (396 aa).

Positions 1-20 are cleaved as a signal peptide; the sequence is MTGFFTFLSFSLAALSVTNA. Positions 21 to 116 are excised as a propeptide; it reads AHILSVPKGA…VEPDAIISQH (96 aa). Residues 37-113 enclose the Inhibitor I9 domain; that stretch reads YIVVMKDDTS…VAFVEPDAII (77 aa). N-linked (GlcNAc...) asparagine glycosylation is present at asparagine 63. The 272-residue stretch at 125 to 396 folds into the Peptidase S8 domain; it reads PWGLSRLSNR…SRLLYNGSGR (272 aa). Residues aspartate 156 and histidine 187 each act as charge relay system in the active site. Asparagine 230 and asparagine 248 each carry an N-linked (GlcNAc...) asparagine glycan. The active-site Charge relay system is the serine 342. Residues 376 to 389 show a composition bias toward polar residues; the sequence is PTIRNPGPDTTSRL. A disordered region spans residues 376–396; the sequence is PTIRNPGPDTTSRLLYNGSGR. A glycan (N-linked (GlcNAc...) asparagine) is linked at asparagine 392.

The protein belongs to the peptidase S8 family.

It is found in the secreted. Secreted subtilisin-like serine protease with keratinolytic activity that contributes to pathogenicity. In Trichophyton tonsurans (Scalp ringworm fungus), this protein is Subtilisin-like protease 5 (SUB5).